Here is a 520-residue protein sequence, read N- to C-terminus: Peptidoglycan-recognition protein LC (520 aa).

Composition is skewed to polar residues over residues 1-14 and 27-36; these read MPFS…QCSN and KNCSTSSTDS. Disordered regions lie at residues 1–78 and 239–278; these read MPFS…RISV and DKWK…AQTP. The Cytoplasmic segment spans residues 1-291; that stretch reads MPFSNETEMS…PFLPNTVGRK (291 aa). Composition is skewed to basic and acidic residues over residues 48–58 and 66–78; these read RPEKETKDRGT and KSEE…RISV. A helical; Signal-anchor for type II membrane protein membrane pass occupies residues 292-312; that stretch reads AVTVTVVFVTLTFLLGIVLAT. Topologically, residues 313–520 are extracellular; that stretch reads TTNLFGKTLN…ASFANWTHWS (208 aa). N389 carries an N-linked (GlcNAc...) asparagine glycan. Cysteines 390 and 396 form a disulfide. An N-acetylmuramoyl-L-alanine amidase domain is found at 412 to 490; it reads QKCDIAYNFL…KLGKIAPSYR (79 aa). N515 is a glycosylation site (N-linked (GlcNAc...) asparagine).

Belongs to the N-acetylmuramoyl-L-alanine amidase 2 family. Proteolytically cleaved, probably by a metaloprotease such as Mmp2; proteolytic cleavage leads to activation of the imd/Relish signaling pathway. Expressed in the fat body and hemocytes.

The protein localises to the membrane. Its activity is regulated as follows. Activated by proteolytic cleavage in response to Gram-negative bacterial infection; cleavage may be mediated by endogenous proteases, such as the metalloprotease Mmp2 or elastase, or by bacterially expressed proteases such as the surface serine protease OmpT. In terms of biological role, major activator of the imd/Relish pathway and is likely to encode a pattern recognition molecule for the humoral immune response. Required for Relish processing and nuclear translocation following proteolytic cleavage. Involved in the response to lipopolysaccharide (LPS) and peptidoglycan of Gram-negative bacteria. The different isoforms probably display different recognition capabilities to various microbial patterns. Mediates the response to LPS and Gram-negative bacteria. Its function is as follows. Mediates the response to LPS, peptidoglycan and Gram-negative bacteria. The sequence is that of Peptidoglycan-recognition protein LC (PGRP-LC) from Drosophila melanogaster (Fruit fly).